Reading from the N-terminus, the 234-residue chain is Elongation factor Tu, chloroplastic (234 aa).

The region spanning 1–125 is the tr-type G domain; it reads KNMITGAAQM…KVDSYIPTPE (125 aa). 47–50 lines the GTP pocket; it reads NKQD.

Belongs to the TRAFAC class translation factor GTPase superfamily. Classic translation factor GTPase family. EF-Tu/EF-1A subfamily.

It localises to the plastid. The protein resides in the chloroplast. The enzyme catalyses GTP + H2O = GDP + phosphate + H(+). In terms of biological role, GTP hydrolase that promotes the GTP-dependent binding of aminoacyl-tRNA to the A-site of ribosomes during protein biosynthesis. This is Elongation factor Tu, chloroplastic (tufA) from Pandorina morum (Freshwater green alga).